A 978-amino-acid chain; its full sequence is MSSLDRKKPQNRSKNNYYNICLKEKGSEELTCEEHARIIFDGLYEFVGLLDAHGNVLEVNQVALEGGGITLEEIRGKPFWKARWWQISKKTEATQKRLVETASSGEFVRCDVEILGKSGGREVIAVDFSLLPICNEEGSIVYLLAEGRNITDKKKAEAMLALKNQELEQSVECIRKLDNAKSDFFAKVSHELRTPLSLILGPLEAVMAAEAGRESPYWKQFEVIQRNAMTLLKQVNTLLDLAKMDARQMGLSYRRANLSQLTRTISSNFEGIAQQKSITFDTKLPVQMVAEVDCEKYERIILNLLSNAFKFTPDGGLIRCCLSLSRPNYALVTVSDSGPGIPPALRKEIFERFHQLSQEGQQATRGTGLGLSIVKEFVELHRGTISVSDAPGGGALFQVKLPLNAPEGAYVASNTAPRRDNPQVVDTDEYLLLAPNAENEAEVLPFQSDQPRVLIVEDNPDMRGFIKDCLSSDYQVYVAPDGAKALELMSNMPPDLLITDLIMPVMSGDMLVHQVRKKNELSHIPIMVLSAKSDAELRVKLLSESVQDFLLKPFSAHELRARVSNLVSMKVAGDALRKELSDQGDDIAILTHRLIKSRHRLQQSNIALSASEARWKAVYENSAAGIVLTDPENRILNANPAFQRITGYGEKDLEGLSMEQLTPSDESPQIKQRLANLLQGGGAEYSVERSYLCKNGSTIWANASVSLMPQRVGESPVILQIIDDITEKKQAQENLNQLQQQLVYVSRSATMGEFAAYIAHEINQPLSAIMTNANAGTRWLGNEPSNIPEAKEALARIIRDSDRAAEIIRMVRSFLKRQETVLKPIDLKALVTDTSLILKAPSQNNSVNLDVVADDELPEIWGDGVQIQQLIINLAMNAIEAISQADCETRQLTLSFSGNDTGDALVISVKDTGPGISERQMAQLFNAFYTTKKEGLGMGLAICLTITEVHNGKIWVECPPAGGACFLVSIPARQGSGT.

The PAS 1 domain maps to 32-103 (CEEHARIIFD…TQKRLVETAS (72 aa)). Residues 108 to 162 (VRCDVEILGKSGGREVIAVDFSLLPICNEEGSIVYLLAEGRNITDKKKAEAMLAL) form the PAC 1 domain. A Histidine kinase 1 domain is found at 187-405 (KVSHELRTPL…LFQVKLPLNA (219 aa)). Residue histidine 190 is modified to Phosphohistidine; by autocatalysis. The Response regulatory domain maps to 452–567 (RVLIVEDNPD…ELRARVSNLV (116 aa)). The residue at position 500 (aspartate 500) is a 4-aspartylphosphate. The PAS 2 domain occupies 611–681 (SEARWKAVYE…QRLANLLQGG (71 aa)). A PAC 2 domain is found at 685-737 (YSVERSYLCKNGSTIWANASVSLMPQRVGESPVILQIIDDITEKKQAQENLNQ). One can recognise a Histidine kinase 2 domain in the interval 757–974 (YIAHEINQPL…CFLVSIPARQ (218 aa)). Histidine 760 carries the post-translational modification Phosphohistidine.

Homodimer. Binds as a dimer to a pseudopalindromic sequence. In terms of processing, autophosphorylated. Activation requires a sequential transfer of a phosphate group from a His in the primary transmitter domain, to an Asp in the receiver domain and to a His in the secondary transmitter domain.

It localises to the cytoplasm. It carries out the reaction ATP + protein L-histidine = ADP + protein N-phospho-L-histidine.. Its function is as follows. Member of the two-component regulatory system TodS/TodT involved in the regulation of toluene degradation. Phosphorylates TodT via a four-step phosphorelay in response to toluene. This is Sensor histidine kinase TodS (todS) from Pseudomonas putida (strain ATCC 700007 / DSM 6899 / JCM 31910 / BCRC 17059 / LMG 24140 / F1).